The primary structure comprises 746 residues: NAD(P)H-quinone oxidoreductase subunit 5, chloroplastic (746 aa).

16 helical membrane passes run 9-29, 40-60, 89-109, 125-145, 147-167, 185-205, 221-241, 258-278, 280-300, 327-347, 354-374, 396-416, 425-445, 547-567, 608-628, and 723-743; these read WIIP…LLLF, WTFL…YLSI, IDPL…LVLI, FAYM…SNLI, VYFF…FWFT, GDFG…SFEF, VNLL…IAKS, TPIS…FLVA, LLPL…IGII, LGYM…FHLI, ALLF…VGYS, TAFL…CFWS, LLFS…TAFY, ILFP…IGIP, FSVS…KPFY, and YLFL…FFYF.

Belongs to the complex I subunit 5 family. NDH is composed of at least 16 different subunits, 5 of which are encoded in the nucleus.

The protein localises to the plastid. It localises to the chloroplast thylakoid membrane. It carries out the reaction a plastoquinone + NADH + (n+1) H(+)(in) = a plastoquinol + NAD(+) + n H(+)(out). The catalysed reaction is a plastoquinone + NADPH + (n+1) H(+)(in) = a plastoquinol + NADP(+) + n H(+)(out). In terms of biological role, NDH shuttles electrons from NAD(P)H:plastoquinone, via FMN and iron-sulfur (Fe-S) centers, to quinones in the photosynthetic chain and possibly in a chloroplast respiratory chain. The immediate electron acceptor for the enzyme in this species is believed to be plastoquinone. Couples the redox reaction to proton translocation, and thus conserves the redox energy in a proton gradient. This Olimarabidopsis pumila (Dwarf rocket) protein is NAD(P)H-quinone oxidoreductase subunit 5, chloroplastic (ndhF).